We begin with the raw amino-acid sequence, 194 residues long: Molybdenum cofactor guanylyltransferase (194 aa).

GTP contacts are provided by residues 12-14 (LAG), lysine 25, asparagine 53, aspartate 70, and aspartate 100. Aspartate 100 lines the Mg(2+) pocket.

The protein belongs to the MobA family. In terms of assembly, monomer. It depends on Mg(2+) as a cofactor.

Its subcellular location is the cytoplasm. It catalyses the reaction Mo-molybdopterin + GTP + H(+) = Mo-molybdopterin guanine dinucleotide + diphosphate. Functionally, transfers a GMP moiety from GTP to Mo-molybdopterin (Mo-MPT) cofactor (Moco or molybdenum cofactor) to form Mo-molybdopterin guanine dinucleotide (Mo-MGD) cofactor. The polypeptide is Molybdenum cofactor guanylyltransferase (Aliivibrio fischeri (strain MJ11) (Vibrio fischeri)).